We begin with the raw amino-acid sequence, 62 residues long: Sauvatide (62 aa).

Positions 1 to 24 (MDILKKSLFLILFLGLVSISFCDG) are cleaved as a signal peptide. Residues 25–46 (EKRQDDDEANESEEKKEIHEVE) constitute a propeptide that is removed on maturation. Lysine 58 is modified (lysine amide).

In terms of tissue distribution, expressed by the skin glands.

It is found in the secreted. In terms of biological role, induces contraction of smooth muscle in isolated rat urinary bladder with an EC(50) value of 2.2nM. This Phyllomedusa sauvagei (Sauvage's leaf frog) protein is Sauvatide.